Consider the following 257-residue polypeptide: Adenosylcobinamide-GDP ribazoletransferase (257 aa).

Transmembrane regions (helical) follow at residues 4-24 (AVRG…WWLG), 40-60 (VVGL…QWFF), 64-84 (FVVQ…LLHL), 116-136 (AAVA…AALL), 140-160 (AALA…ALLI), and 193-213 (LFVT…VVAV).

This sequence belongs to the CobS family. The cofactor is Mg(2+).

The protein resides in the cell inner membrane. It carries out the reaction alpha-ribazole + adenosylcob(III)inamide-GDP = adenosylcob(III)alamin + GMP + H(+). The enzyme catalyses alpha-ribazole 5'-phosphate + adenosylcob(III)inamide-GDP = adenosylcob(III)alamin 5'-phosphate + GMP + H(+). It functions in the pathway cofactor biosynthesis; adenosylcobalamin biosynthesis; adenosylcobalamin from cob(II)yrinate a,c-diamide: step 7/7. Its function is as follows. Joins adenosylcobinamide-GDP and alpha-ribazole to generate adenosylcobalamin (Ado-cobalamin). Also synthesizes adenosylcobalamin 5'-phosphate from adenosylcobinamide-GDP and alpha-ribazole 5'-phosphate. The chain is Adenosylcobinamide-GDP ribazoletransferase from Alkalilimnicola ehrlichii (strain ATCC BAA-1101 / DSM 17681 / MLHE-1).